A 403-amino-acid polypeptide reads, in one-letter code: Octaketide synthase 2 (403 aa).

Cysteine 174 is an active-site residue. CoA is bound by residues serine 281 and 318-321 (GGRA).

It belongs to the thiolase-like superfamily. Chalcone/stilbene synthases family. Homodimer.

It functions in the pathway secondary metabolite biosynthesis; flavonoid biosynthesis. Its function is as follows. Catalyzes the iterative condensations of 8 molecules of malonyl-CoA to produce aromatic octaketides, SEK4 and SEK4b, the products of the minimal polyketide synthase for the benzoisochromanequinone actinorhodin. May be involved in the biosynthesis of the octaketide barbaloin. This Aloe arborescens (Kidachi aloe) protein is Octaketide synthase 2 (PKS4).